A 716-amino-acid chain; its full sequence is Pyruvate/proton symporter BtsT (716 aa).

Over 1-5 (MDTKK) the chain is Cytoplasmic. Residues 6-26 (IFKHIPWVILGIIGAFCLAVV) form a helical membrane-spanning segment. The Periplasmic portion of the chain corresponds to 27 to 30 (ALRR). The helical transmembrane segment at 31-51 (GEHISALWIVVASVSVYLVAY) threads the bilayer. Residues 52–88 (RYYSLYIAQKVMKLDPTRATPAVINNDGLNYVPTNRY) are Cytoplasmic-facing. A helical transmembrane segment spans residues 89-109 (VLFGHHFAAIAGAGPLVGPVL). The Periplasmic portion of the chain corresponds to 110-119 (AAQMGYLPGT). Residues 120–140 (LWLLAGVVLAGAVQDFMVLFI) traverse the membrane as a helical segment. At 141-163 (SSRRNGASLGEMIKEEMGPVPGT) the chain is on the cytoplasmic side. Residues 164 to 184 (IALFGCFLIMIIILAVLALIV) traverse the membrane as a helical segment. Residues 185-191 (VKALAES) lie on the Periplasmic side of the membrane. The chain crosses the membrane as a helical span at residues 192 to 212 (PWGVFTVCSTVPIALFMGIYM). The Cytoplasmic segment spans residues 213–222 (RFIRPGRVGE). A helical transmembrane segment spans residues 223–243 (VSVIGIVLLVASIYFGGVIAH). The Periplasmic portion of the chain corresponds to 244 to 257 (DPYWGPALTFKDTT). The helical transmembrane segment at 258–278 (ITFALIGYAFVSALLPVWLIL) threads the bilayer. Residues 279–282 (APRD) lie on the Cytoplasmic side of the membrane. The chain crosses the membrane as a helical span at residues 283–303 (YLATFLKIGVIVGLALGIVVL). Residues 304–326 (NPELKMPAMTQYIDGTGPLWKGA) lie on the Periplasmic side of the membrane. A helical transmembrane segment spans residues 327–347 (LFPFLFITIACGAVSGFHALI). The Cytoplasmic segment spans residues 348–374 (SSGTTPKLLANETDARFIGYGAMLMES). Residues 375–395 (FVAIMALVAASIIEPGLYFAM) traverse the membrane as a helical segment. At 396–484 (NTPPAGLGIT…HVFHKVLPMA (89 aa)) the chain is on the periplasmic side. Residues 485–505 (DMGFWYHFGILFEALFILTAL) form a helical membrane-spanning segment. Residues 506–531 (DAGTRSGRFMLQDLLGNFIPFLKKTD) are Cytoplasmic-facing. Residues 532-552 (SLVAGIIGTAGCVGLWGYLLY) traverse the membrane as a helical segment. Over 553–568 (QGVVDPLGGVKSLWPL) the chain is Periplasmic. A helical transmembrane segment spans residues 569–589 (FGISNQMLAAVALVLGTVVLI). Residues 590 to 596 (KMKRTQY) lie on the Cytoplasmic side of the membrane. A helical membrane pass occupies residues 597-617 (IWVTVVPAVWLLICTTWALGL). Residues 618-668 (KLFSTNPQMEGFFYMASQYKEKIANGTDLTAQQIANMNHIVVNNYTNAGLS) are Periplasmic-facing. A helical membrane pass occupies residues 669–689 (ILFLIVVYSIIFYGFKTWLAV). The Cytoplasmic segment spans residues 690-716 (RNSDKRTDKETPYVPIPEGGVKISSHH). A disordered region spans residues 696 to 716 (TDKETPYVPIPEGGVKISSHH).

Belongs to the peptide transporter carbon starvation (CstA) (TC 2.A.114) family. Interacts with BtsS and YpdA.

Its subcellular location is the cell inner membrane. It catalyses the reaction pyruvate(out) + H(+)(out) = pyruvate(in) + H(+)(in). With respect to regulation, transport is inhibited by the protonophores 2,4-dinitrophenol (DNP) and carbonyl cyanide m-chlorophenyl hydrazone (CCCP), but not by ionophores such as valinomycin, nonactin and nigericin. In terms of biological role, transports pyruvate with a high affinity and specificity. The process is driven by the proton motive force. Under nutrient limiting conditions, mediates the uptake of pyruvate, thus enabling it to be used as a carbon source for the growth and survival. Part of a nutrient-sensing regulatory network composed of the two-component regulatory systems BtsS/BtsR and YpdA/YpdB, and their respective target proteins, BtsT and YhjX. The polypeptide is Pyruvate/proton symporter BtsT (Escherichia coli (strain K12)).